A 412-amino-acid polypeptide reads, in one-letter code: Peptidase T (412 aa).

Zn(2+) is bound at residue His79. Residue Asp81 is part of the active site. Asp142 is a Zn(2+) binding site. The active-site Proton acceptor is the Glu176. Positions 177, 199, and 381 each coordinate Zn(2+).

The protein belongs to the peptidase M20B family. Requires Zn(2+) as cofactor.

It localises to the cytoplasm. The catalysed reaction is Release of the N-terminal residue from a tripeptide.. Functionally, cleaves the N-terminal amino acid of tripeptides. The chain is Peptidase T from Exiguobacterium sp. (strain ATCC BAA-1283 / AT1b).